Consider the following 85-residue polypeptide: Large ribosomal subunit protein bL27 (85 aa).

The disordered stretch occupies residues 1–22; sequence MAHKKAAGSTRNGRDSESKRLG.

This sequence belongs to the bacterial ribosomal protein bL27 family.

The protein is Large ribosomal subunit protein bL27 of Pseudoalteromonas translucida (strain TAC 125).